Here is a 477-residue protein sequence, read N- to C-terminus: Glutamyl-tRNA reductase (477 aa).

Residues T49 to R52, S109, E114 to Q116, and Q120 contribute to the substrate site. The active-site Nucleophile is the C50. Residue G221–S226 participates in NADP(+) binding.

This sequence belongs to the glutamyl-tRNA reductase family. As to quaternary structure, homodimer.

It carries out the reaction (S)-4-amino-5-oxopentanoate + tRNA(Glu) + NADP(+) = L-glutamyl-tRNA(Glu) + NADPH + H(+). It functions in the pathway porphyrin-containing compound metabolism; protoporphyrin-IX biosynthesis; 5-aminolevulinate from L-glutamyl-tRNA(Glu): step 1/2. Functionally, catalyzes the NADPH-dependent reduction of glutamyl-tRNA(Glu) to glutamate 1-semialdehyde (GSA). In Thermobifida fusca (strain YX), this protein is Glutamyl-tRNA reductase.